Reading from the N-terminus, the 381-residue chain is Putative MgpC-like protein MPN_503 (381 aa).

The disordered stretch occupies residues 1-109 (MNGVAQDKVH…TDSQQSGHNS (109 aa)). The segment covering 13–31 (EQTTQWNQQASQKNLTNNP) has biased composition (polar residues). Basic and acidic residues-rich tracts occupy residues 40–51 (KLDKGRAYRKLN) and 61–73 (DSTK…DKDG). Polar residues predominate over residues 89–109 (VSSTESQMAAVTDSQQSGHNS).

This sequence belongs to the MgpC family.

This is Putative MgpC-like protein MPN_503 from Mycoplasma pneumoniae (strain ATCC 29342 / M129 / Subtype 1) (Mycoplasmoides pneumoniae).